The following is a 161-amino-acid chain: Non-secretory ribonuclease (161 aa).

An N-terminal signal peptide occupies residues 1–27 (MVPKLFTSQICLLLLLGLMGVEGSLHA). Trp34 carries C-linked (Man) tryptophan glycosylation. The Proton acceptor role is filled by His42. An N-linked (GlcNAc...) asparagine glycan is attached at Asn44. 4 disulfide bridges follow: Cys50-Cys110, Cys64-Cys123, Cys82-Cys138, and Cys89-Cys98. Tyr60 bears the 3'-nitrotyrosine mark. Residue 65 to 69 (KNQNT) participates in substrate binding. Asn86, Asn92, Asn111, and Asn119 each carry an N-linked (GlcNAc...) asparagine glycan. The active-site Proton donor is His156.

Belongs to the pancreatic ribonuclease family. As to quaternary structure, interacts with and forms a tight 1:1 complex with RNH1. Dimerization of two such complexes may occur.

It localises to the lysosome. Its subcellular location is the cytoplasmic granule. It carries out the reaction an [RNA] containing cytidine + H2O = an [RNA]-3'-cytidine-3'-phosphate + a 5'-hydroxy-ribonucleotide-3'-[RNA].. The catalysed reaction is an [RNA] containing uridine + H2O = an [RNA]-3'-uridine-3'-phosphate + a 5'-hydroxy-ribonucleotide-3'-[RNA].. Its function is as follows. This is a non-secretory ribonuclease. It is a pyrimidine specific nuclease with a slight preference for U. Cytotoxin and helminthotoxin. Possesses a wide variety of biological activities. The protein is Non-secretory ribonuclease (RNASE2) of Nomascus leucogenys (Northern white-cheeked gibbon).